The sequence spans 503 residues: Aromatase (503 aa).

2 residues coordinate substrate: D309 and M374. C437 is a binding site for heme.

Belongs to the cytochrome P450 family. Heme is required as a cofactor.

It is found in the membrane. The enzyme catalyses testosterone + 3 reduced [NADPH--hemoprotein reductase] + 3 O2 = 17beta-estradiol + formate + 3 oxidized [NADPH--hemoprotein reductase] + 4 H2O + 4 H(+). It carries out the reaction androst-4-ene-3,17-dione + 3 reduced [NADPH--hemoprotein reductase] + 3 O2 = estrone + formate + 3 oxidized [NADPH--hemoprotein reductase] + 4 H2O + 4 H(+). In terms of biological role, catalyzes the formation of aromatic C18 estrogens from C19 androgens. The chain is Aromatase (CYP19A1) from Callithrix jacchus (White-tufted-ear marmoset).